The following is a 272-amino-acid chain: Phosphoglycolate phosphatase (272 aa).

D19 serves as the catalytic Nucleophile. Residues D19, D21, and D182 each coordinate Mg(2+).

It belongs to the HAD-like hydrolase superfamily. CbbY/CbbZ/Gph/YieH family. The cofactor is Mg(2+).

It catalyses the reaction 2-phosphoglycolate + H2O = glycolate + phosphate. The protein operates within organic acid metabolism; glycolate biosynthesis; glycolate from 2-phosphoglycolate: step 1/1. In terms of biological role, specifically catalyzes the dephosphorylation of 2-phosphoglycolate. Is involved in the dissimilation of the intracellular 2-phosphoglycolate formed during the DNA repair of 3'-phosphoglycolate ends, a major class of DNA lesions induced by oxidative stress. This is Phosphoglycolate phosphatase from Pseudomonas fluorescens (strain Pf0-1).